We begin with the raw amino-acid sequence, 384 residues long: Ribonucleoside-diphosphate reductase small chain (384 aa).

Fe cation-binding residues include D130, E161, and H164. Y168 is a catalytic residue. 3 residues coordinate Fe cation: E224, E258, and H261.

It belongs to the ribonucleoside diphosphate reductase small chain family. Heterodimer of a large and a small subunit. Fe cation serves as cofactor.

It catalyses the reaction a 2'-deoxyribonucleoside 5'-diphosphate + [thioredoxin]-disulfide + H2O = a ribonucleoside 5'-diphosphate + [thioredoxin]-dithiol. Functionally, provides the precursors necessary for DNA synthesis. Catalyzes the biosynthesis of deoxyribonucleotides from the corresponding ribonucleotides. The chain is Ribonucleoside-diphosphate reductase small chain from Spisula solidissima (Atlantic surf-clam).